Consider the following 103-residue polypeptide: MYAIVEIAGKQFKVTKDLYIYTPKMDQEAGSSVSFDKILLLQNDQDIQVGDPTVAGAKIEGKVIEHVKGDKIIVFKRKRRKGYKTKQGHRQGYTKVLIQNILR.

It belongs to the bacterial ribosomal protein bL21 family. In terms of assembly, part of the 50S ribosomal subunit. Contacts protein L20.

Its function is as follows. This protein binds to 23S rRNA in the presence of protein L20. In Amoebophilus asiaticus (strain 5a2), this protein is Large ribosomal subunit protein bL21.